Here is an 82-residue protein sequence, read N- to C-terminus: Myosin light chain alkali (82 aa).

An EF-hand domain is found at 7-42 (GCYEDFIECLKLYDKEENGTMMLAELQHALLALGES).

In terms of assembly, myosin is a hexamer of 2 heavy chains and 4 light chains.

This is Myosin light chain alkali (Mlc1) from Drosophila mauritiana (Fruit fly).